Reading from the N-terminus, the 305-residue chain is Glycine--tRNA ligase alpha subunit (305 aa).

It belongs to the class-II aminoacyl-tRNA synthetase family. As to quaternary structure, tetramer of two alpha and two beta subunits.

Its subcellular location is the cytoplasm. It catalyses the reaction tRNA(Gly) + glycine + ATP = glycyl-tRNA(Gly) + AMP + diphosphate. This chain is Glycine--tRNA ligase alpha subunit, found in Streptococcus suis (strain 05ZYH33).